Reading from the N-terminus, the 328-residue chain is D-cysteine desulfhydrase (328 aa).

An N6-(pyridoxal phosphate)lysine modification is found at Lys-51.

This sequence belongs to the ACC deaminase/D-cysteine desulfhydrase family. As to quaternary structure, homodimer. Pyridoxal 5'-phosphate serves as cofactor.

It carries out the reaction D-cysteine + H2O = hydrogen sulfide + pyruvate + NH4(+) + H(+). Its function is as follows. Catalyzes the alpha,beta-elimination reaction of D-cysteine and of several D-cysteine derivatives. It could be a defense mechanism against D-cysteine. This chain is D-cysteine desulfhydrase, found in Escherichia fergusonii (strain ATCC 35469 / DSM 13698 / CCUG 18766 / IAM 14443 / JCM 21226 / LMG 7866 / NBRC 102419 / NCTC 12128 / CDC 0568-73).